The chain runs to 153 residues: UPF0178 protein MXAN_5526 (153 aa).

It belongs to the UPF0178 family.

The polypeptide is UPF0178 protein MXAN_5526 (Myxococcus xanthus (strain DK1622)).